The following is a 207-amino-acid chain: Protein dct-5 (207 aa).

Residues 13–33 (LNFILSIMNSYLFVLIVSIGF) traverse the membrane as a helical segment.

It localises to the membrane. Its function is as follows. Acts downstream of daf-16/foxo to suppress tumors induced by disruption of gld-1. Potentially a direct target of daf-15/foxo. The polypeptide is Protein dct-5 (dct-5) (Caenorhabditis elegans).